The primary structure comprises 194 residues: Probable GTP-binding protein EngB (194 aa).

The EngB-type G domain occupies 22–194; the sequence is GKPEIALVGR…SVWEWITAHM (173 aa). Residues 30 to 37, 57 to 61, 75 to 78, 142 to 145, and 175 to 177 each bind GTP; these read GRSNVGKS, GKTQT, DVPG, TKSD, and FSS. The Mg(2+) site is built by S37 and T59.

It belongs to the TRAFAC class TrmE-Era-EngA-EngB-Septin-like GTPase superfamily. EngB GTPase family. Mg(2+) is required as a cofactor.

Necessary for normal cell division and for the maintenance of normal septation. The sequence is that of Probable GTP-binding protein EngB from Leuconostoc citreum (strain KM20).